The following is a 173-amino-acid chain: Large ribosomal subunit protein uL10 (173 aa).

Belongs to the universal ribosomal protein uL10 family. In terms of assembly, part of the ribosomal stalk of the 50S ribosomal subunit. The N-terminus interacts with L11 and the large rRNA to form the base of the stalk. The C-terminus forms an elongated spine to which L12 dimers bind in a sequential fashion forming a multimeric L10(L12)X complex.

Its function is as follows. Forms part of the ribosomal stalk, playing a central role in the interaction of the ribosome with GTP-bound translation factors. The sequence is that of Large ribosomal subunit protein uL10 from Bifidobacterium adolescentis (strain ATCC 15703 / DSM 20083 / NCTC 11814 / E194a).